Reading from the N-terminus, the 146-residue chain is MQLNTIKPAIGSTKNRKRIGRGVGSGHGKTATKGHKGQKARSGGSVKPGFEGGQMPMHRRLPKRGFTPLSKKDYALVNLCQLEVFEAGSVIDAEALLKSGIISGVRDGIKVLATGDITRALTIKAHKFSASAREKITAAGGSIEEI.

A disordered region spans residues methionine 1–arginine 64. The segment covering threonine 30 to lysine 39 has biased composition (basic residues).

The protein belongs to the universal ribosomal protein uL15 family. In terms of assembly, part of the 50S ribosomal subunit.

Its function is as follows. Binds to the 23S rRNA. This is Large ribosomal subunit protein uL15 from Geobacter sp. (strain M21).